Consider the following 213-residue polypeptide: Pyridoxine/pyridoxamine 5'-phosphate oxidase (213 aa).

Substrate contacts are provided by residues Arg-8 to Tyr-11 and Lys-67. Residues Arg-62 to Lys-67, Phe-77 to Thr-78, Arg-83, Lys-84, and Gln-106 contribute to the FMN site. Positions 124, 128, and 132 each coordinate substrate. FMN is bound by residues Gln-141–Ser-142 and Trp-186. Arg-192–His-194 contributes to the substrate binding site. Arg-196 lines the FMN pocket.

This sequence belongs to the pyridoxamine 5'-phosphate oxidase family. Homodimer. The cofactor is FMN.

It catalyses the reaction pyridoxamine 5'-phosphate + O2 + H2O = pyridoxal 5'-phosphate + H2O2 + NH4(+). The catalysed reaction is pyridoxine 5'-phosphate + O2 = pyridoxal 5'-phosphate + H2O2. Its pathway is cofactor metabolism; pyridoxal 5'-phosphate salvage; pyridoxal 5'-phosphate from pyridoxamine 5'-phosphate: step 1/1. The protein operates within cofactor metabolism; pyridoxal 5'-phosphate salvage; pyridoxal 5'-phosphate from pyridoxine 5'-phosphate: step 1/1. Functionally, catalyzes the oxidation of either pyridoxine 5'-phosphate (PNP) or pyridoxamine 5'-phosphate (PMP) into pyridoxal 5'-phosphate (PLP). This chain is Pyridoxine/pyridoxamine 5'-phosphate oxidase, found in Shewanella sediminis (strain HAW-EB3).